The chain runs to 447 residues: Methyl-coenzyme M reductase II subunit beta (447 aa).

Y368 provides a ligand contact to coenzyme M. Position 370 (G370) interacts with coenzyme B.

This sequence belongs to the methyl-coenzyme M reductase beta subunit family. In terms of assembly, MCR is a hexamer of two alpha, two beta, and two gamma chains, forming a dimer of heterotrimers. The cofactor is coenzyme F430.

The catalysed reaction is coenzyme B + methyl-coenzyme M = methane + coenzyme M-coenzyme B heterodisulfide. Its pathway is one-carbon metabolism; methyl-coenzyme M reduction; methane from methyl-coenzyme M: step 1/1. Functionally, component of the methyl-coenzyme M reductase (MCR) I that catalyzes the reductive cleavage of methyl-coenzyme M (CoM-S-CH3 or 2-(methylthio)ethanesulfonate) using coenzyme B (CoB or 7-mercaptoheptanoylthreonine phosphate) as reductant which results in the production of methane and the mixed heterodisulfide of CoB and CoM (CoM-S-S-CoB). This is the final step in methanogenesis. This chain is Methyl-coenzyme M reductase II subunit beta (mrtB), found in Methanocaldococcus jannaschii (strain ATCC 43067 / DSM 2661 / JAL-1 / JCM 10045 / NBRC 100440) (Methanococcus jannaschii).